Here is a 548-residue protein sequence, read N- to C-terminus: Lysine--tRNA ligase (548 aa).

Residues 43 to 51 (PSGVPHLGN) carry the 'HIGH' region motif. A 'KMSKS' region motif is present at residues 308–312 (PFSSS).

Belongs to the class-I aminoacyl-tRNA synthetase family.

It localises to the cytoplasm. It carries out the reaction tRNA(Lys) + L-lysine + ATP = L-lysyl-tRNA(Lys) + AMP + diphosphate. This Halobacterium salinarum (strain ATCC 700922 / JCM 11081 / NRC-1) (Halobacterium halobium) protein is Lysine--tRNA ligase.